Reading from the N-terminus, the 102-residue chain is Antitoxin VapB46 (102 aa).

Belongs to the phD/YefM antitoxin family.

Its function is as follows. Antitoxin component of a type II toxin-antitoxin (TA) system. Neutralizes the effect of cognate toxin VapC46. In Mycobacterium tuberculosis (strain CDC 1551 / Oshkosh), this protein is Antitoxin VapB46 (vapB46).